The sequence spans 40 residues: Photosystem II reaction center protein J (40 aa).

A helical transmembrane segment spans residues 8–28 (IPLWLIGTVTGILVIGLIGFF).

It belongs to the PsbJ family. In terms of assembly, PSII is composed of 1 copy each of membrane proteins PsbA, PsbB, PsbC, PsbD, PsbE, PsbF, PsbH, PsbI, PsbJ, PsbK, PsbL, PsbM, PsbT, PsbX, PsbY, PsbZ, Psb30/Ycf12, at least 3 peripheral proteins of the oxygen-evolving complex and a large number of cofactors. It forms dimeric complexes.

The protein localises to the plastid. It localises to the chloroplast thylakoid membrane. One of the components of the core complex of photosystem II (PSII). PSII is a light-driven water:plastoquinone oxidoreductase that uses light energy to abstract electrons from H(2)O, generating O(2) and a proton gradient subsequently used for ATP formation. It consists of a core antenna complex that captures photons, and an electron transfer chain that converts photonic excitation into a charge separation. This Zea mays (Maize) protein is Photosystem II reaction center protein J.